We begin with the raw amino-acid sequence, 62 residues long: Photosystem II reaction center protein Z (62 aa).

Helical transmembrane passes span 8 to 28 (AVFA…VVFA) and 41 to 61 (FSGT…NSLI).

It belongs to the PsbZ family. As to quaternary structure, PSII is composed of 1 copy each of membrane proteins PsbA, PsbB, PsbC, PsbD, PsbE, PsbF, PsbH, PsbI, PsbJ, PsbK, PsbL, PsbM, PsbT, PsbY, PsbZ, Psb30/Ycf12, at least 3 peripheral proteins of the oxygen-evolving complex and a large number of cofactors. It forms dimeric complexes.

It is found in the plastid. The protein resides in the chloroplast thylakoid membrane. Its function is as follows. May control the interaction of photosystem II (PSII) cores with the light-harvesting antenna, regulates electron flow through the 2 photosystem reaction centers. PSII is a light-driven water plastoquinone oxidoreductase, using light energy to abstract electrons from H(2)O, generating a proton gradient subsequently used for ATP formation. The sequence is that of Photosystem II reaction center protein Z from Spinacia oleracea (Spinach).